Reading from the N-terminus, the 135-residue chain is Putative pre-16S rRNA nuclease (135 aa).

Belongs to the YqgF nuclease family.

It is found in the cytoplasm. In terms of biological role, could be a nuclease involved in processing of the 5'-end of pre-16S rRNA. In Buchnera aphidicola subsp. Acyrthosiphon pisum (strain 5A), this protein is Putative pre-16S rRNA nuclease.